An 887-amino-acid chain; its full sequence is Phosphatidylinositol 3-kinase catalytic subunit type 3 (887 aa).

The 150-residue stretch at 35–184 (YKAVLEDPML…LAKLTKAHRQ (150 aa)) folds into the C2 PI3K-type domain. The segment at 149–170 (VEADGSEPTKTPGRTSSTLSED) is disordered. Polar residues predominate over residues 156-170 (PTKTPGRTSSTLSED). A Phosphothreonine; by AMPK modification is found at T163. The residue at position 165 (S165) is a Phosphoserine; by AMPK. Residues S244, S261, and S282 each carry the phosphoserine modification. The region spanning 283 to 520 (DHDLKPNAAT…PKTHEMYLNV (238 aa)) is the PIK helical domain. Positions 447–467 (TSPLPSVSSPPPASKTKEVPD) are disordered. One can recognise a PI3K/PI4K catalytic domain in the interval 605 to 871 (IPETATLFKS…LIDESVHALF (267 aa)). Residues 611 to 617 (LFKSALM) are G-loop. The segment at 740 to 748 (GVGDRHLDN) is catalytic loop. The tract at residues 759-780 (HIDFGYILGRDPKPLPPPMKLN) is activation loop.

The protein belongs to the PI3/PI4-kinase family. In terms of assembly, component of the PI3K (PI3KC3/PI3K-III/class III phosphatidylinositol 3-kinase) complex the core of which is composed of the catalytic subunit PIK3C3, the regulatory subunit PIK3R4 and BECN1 associating with additional regulatory/auxiliary subunits to form alternative complex forms. Alternative complex forms containing a fourth regulatory subunit in a mutually exclusive manner are: the PI3K complex I (PI3KC3-C1) containing ATG14, and the PI3K complex II (PI3KC3-C2) containing UVRAG. PI3KC3-C1 displays a V-shaped architecture with PIK3R4 serving as a bridge between PIK3C3 and the ATG14:BECN1 subcomplex. Both, PI3KC3-C1 and PI3KC3-C2, can associate with further regulatory subunits such as RUBCN, SH3GLB1/Bif-1 and AMBRA1. PI3KC3-C1 probably associates with PIK3CB. Interacts with RAB7A in the presence of PIK3R4. Interacts with AMBRA1. Interacts with BECN1P1/BECN2. Interacts with SLAMF1. May be a component of a complex composed of RAB5A (in GDP-bound form), DYN2 and PIK3C3. Interacts with NCKAP1L. Interacts with ATG14; this interaction is increased in the absence of TMEM39A. Interacts with STEEP1; the interaction is STING1-dependent and required for trafficking of STING1 from the endoplasmic reticulum. Interacts with YWHAG. Interacts with ARMC3. Mn(2+) is required as a cofactor. Ubiquitinated via 'Lys-29'- and 'Lys-48'-linked ubiquitination by UBE3C, promoting its degradation. Deubiquitination by ZRANB1/TRABID promotes its stabilization, leading to autophagosome maturation. Ubiquitously expressed, with a highest expression in skeletal muscle.

The protein localises to the midbody. It localises to the late endosome. The protein resides in the cytoplasmic vesicle. Its subcellular location is the autophagosome. It carries out the reaction a 1,2-diacyl-sn-glycero-3-phospho-(1D-myo-inositol) + ATP = a 1,2-diacyl-sn-glycero-3-phospho-(1D-myo-inositol-3-phosphate) + ADP + H(+). Catalytic subunit of the PI3K complex that mediates formation of phosphatidylinositol 3-phosphate; different complex forms are believed to play a role in multiple membrane trafficking pathways: PI3KC3-C1 is involved in initiation of autophagosomes and PI3KC3-C2 in maturation of autophagosomes and endocytosis. As part of PI3KC3-C1, promotes endoplasmic reticulum membrane curvature formation prior to vesicle budding. Involved in regulation of degradative endocytic trafficking and required for the abscission step in cytokinesis, probably in the context of PI3KC3-C2. Involved in the transport of lysosomal enzyme precursors to lysosomes. Required for transport from early to late endosomes. In terms of biological role, (Microbial infection) Kinase activity is required for SARS coronavirus-2/SARS-CoV-2 replication. This chain is Phosphatidylinositol 3-kinase catalytic subunit type 3, found in Homo sapiens (Human).